Consider the following 324-residue polypeptide: Probable cell division protein WhiA (324 aa).

The segment at residues 276-310 (TLKELGEMMQGGKVSKSGINHRLRKIDEFADKLRN) is a DNA-binding region (H-T-H motif).

It belongs to the WhiA family.

Involved in cell division and chromosome segregation. The protein is Probable cell division protein WhiA of Shouchella clausii (strain KSM-K16) (Alkalihalobacillus clausii).